The chain runs to 27 residues: NVLVPPCSGCYSQSGNTCYYDVYKCPS.

Pro-6 carries the hydroxyproline modification. 2 disulfides stabilise this stretch: Cys-7–Cys-18 and Cys-10–Cys-25.

Its function is as follows. Has analgesic and anti-inflammatory activity in vivo. At a dose of 0.1 and 1 mg/kg, exhibits anti-inflammatory activity by reducing the volume of edema during 24 h better than the nonsteroidal anti-inflammatory drug, Diclofenac, at dose of 1 mg/kg in a mouse model of acute local lambda-carrageenan-induced inflammation. At a dose of 1 mg/kg, reduces the content of tumor necrosis factor-alpha (TNF-alpha). Demonstrates a significant analgesic effect on acute pain sensitivity in the carrageenan-induced thermal hyperalgesia model at doses of 0.1 and 1 mg/kg. Not toxic in mice, however stimulates exploratory motivation and active search behavior, and demonstrates an anti-anxiety effect. Does not exhibit any effect on currents of rat acid-sensing ion channels ASIC1a or ASIC3. The polypeptide is AnmTX Sco 9a-1 (Stomphia coccinea (Spotted swimming anemone)).